The sequence spans 199 residues: UPF0637 protein YsbB (199 aa).

The protein belongs to the UPF0637 family.

This is UPF0637 protein YsbB (ysbB) from Lactococcus lactis subsp. lactis (strain IL1403) (Streptococcus lactis).